Reading from the N-terminus, the 216-residue chain is Pyridoxine/pyridoxamine 5'-phosphate oxidase (216 aa).

Substrate-binding positions include 12–15 (RREY) and K70. FMN contacts are provided by residues 65–70 (RVVLLK), 80–81 (YT), R86, K87, and Q109. Substrate is bound by residues Y127 and R131. Residues 144-145 (QS) and W189 each bind FMN. 195–197 (RLH) is a substrate binding site. Residue R199 coordinates FMN.

It belongs to the pyridoxamine 5'-phosphate oxidase family. In terms of assembly, homodimer. It depends on FMN as a cofactor.

It carries out the reaction pyridoxamine 5'-phosphate + O2 + H2O = pyridoxal 5'-phosphate + H2O2 + NH4(+). The catalysed reaction is pyridoxine 5'-phosphate + O2 = pyridoxal 5'-phosphate + H2O2. The protein operates within cofactor metabolism; pyridoxal 5'-phosphate salvage; pyridoxal 5'-phosphate from pyridoxamine 5'-phosphate: step 1/1. Its pathway is cofactor metabolism; pyridoxal 5'-phosphate salvage; pyridoxal 5'-phosphate from pyridoxine 5'-phosphate: step 1/1. Its function is as follows. Catalyzes the oxidation of either pyridoxine 5'-phosphate (PNP) or pyridoxamine 5'-phosphate (PMP) into pyridoxal 5'-phosphate (PLP). In Blochmanniella pennsylvanica (strain BPEN), this protein is Pyridoxine/pyridoxamine 5'-phosphate oxidase.